Reading from the N-terminus, the 800-residue chain is Small ribosomal subunit protein uS3c (800 aa).

Residues 1–118 (MGQKVHPSGF…LQVKKDILVK (118 aa)) are S3-like 1st part. Positions 119-664 (LQKTRQYLTN…FLDCKFEELE (546 aa)) are intervening sequence (IVS). The S3-like 2nd part stretch occupies residues 665-800 (RRKTMWVQNL…TKLVTESTGA (136 aa)).

Belongs to the universal ribosomal protein uS3 family. As to quaternary structure, part of the 30S ribosomal subunit.

Its subcellular location is the plastid. The protein resides in the chloroplast. The protein is Small ribosomal subunit protein uS3c (rps3) of Chlamydomonas moewusii (Chlamydomonas eugametos).